The primary structure comprises 467 residues: Prenyltransferase GME11375 (467 aa).

Position 93 (glutamate 93) interacts with L-tryptophan. Residues arginine 108, lysine 196, tyrosine 198, lysine 266, tyrosine 268, and tyrosine 436 each coordinate dimethylallyl diphosphate.

Belongs to the tryptophan dimethylallyltransferase family.

The protein operates within secondary metabolite biosynthesis. Prenyltransferase; part of the gene cluster that mediates the biosynthesis of dibenzodioxocinones such as pestalotiollide B, a novel class of inhibitors against cholesterol ester transfer protein (CEPT). The biosynthesis initiates from condensation of acetate and malonate units catalyzed by the non-reducing PKS pks8/GME11356. Pks8/GME11356 lacks a thioesterase (TE) domain, which is important to the cyclizing of the third ring of atrochrysone carboxylic acid, and the esterase GME11355 might play the role of TE and catalyzes the cyclization reaction of the C ring. The lactamase-like protein GME11357 (or other beta-lactamases in Pestalotiopsis microspora) probably hydrolyzes the thioester bond between the ACP of pks8/GME11356 and the intermediate to release atrochrysone carboxylic acid, which is spontaneously dehydrates to form endocrocin anthrone. Endocrocin anthrone is further converted to emodin via the endocrocin intermediate. Emodin is then oxidized by several enzymes such as the Baeyer-Villiger oxidase GME11358, the oxidoreductase GME11367, the short chain dehydrogenase/reductase GME11373, as well as by other oxidoreductases from the cluster, to modify the A and C rings and open the B ring, and finally yield monodictyphenone. The prenyltransferase GME11375 may catalyze the addition reaction between the C5 side chains and the carbon bone of dibenzodioxocinones. The remaining biochemical reactions to the final product dibenzodioxocinones should be methylation catalyzed by methyltransferase GME11366 and reduction and lactonization reaction catalyzed by a series of oxidordeuctases. This is Prenyltransferase GME11375 from Pestalotiopsis microspora.